Here is a 127-residue protein sequence, read N- to C-terminus: Large ribosomal subunit protein bL12 (127 aa).

N6-methyllysine is present on residues Lys77 and Lys88.

This sequence belongs to the bacterial ribosomal protein bL12 family. As to quaternary structure, homodimer. Part of the ribosomal stalk of the 50S ribosomal subunit. Forms a multimeric L10(L12)X complex, where L10 forms an elongated spine to which 2 to 4 L12 dimers bind in a sequential fashion. Binds GTP-bound translation factors.

In terms of biological role, forms part of the ribosomal stalk which helps the ribosome interact with GTP-bound translation factors. Is thus essential for accurate translation. The chain is Large ribosomal subunit protein bL12 from Nitratidesulfovibrio vulgaris (strain DSM 19637 / Miyazaki F) (Desulfovibrio vulgaris).